We begin with the raw amino-acid sequence, 194 residues long: IMP cyclohydrolase (194 aa).

This sequence belongs to the archaeal IMP cyclohydrolase family.

It catalyses the reaction IMP + H2O = 5-formamido-1-(5-phospho-D-ribosyl)imidazole-4-carboxamide. The protein operates within purine metabolism; IMP biosynthesis via de novo pathway; IMP from 5-formamido-1-(5-phospho-D-ribosyl)imidazole-4-carboxamide: step 1/1. In terms of biological role, catalyzes the cyclization of 5-formylamidoimidazole-4-carboxamide ribonucleotide to IMP. The chain is IMP cyclohydrolase from Halobacterium salinarum (strain ATCC 29341 / DSM 671 / R1).